Reading from the N-terminus, the 480-residue chain is Gamma-aminobutyric acid receptor subunit rho-1 (480 aa).

Residues methionine 1–alanine 21 form the signal peptide. Topologically, residues alanine 22–histidine 281 are extracellular. Residues proline 29–arginine 38 are compositionally biased toward basic and acidic residues. A disordered region spans residues proline 29–aspartate 67. Residues lysine 39–arginine 48 are compositionally biased toward basic residues. Arginine 126 is a 4-aminobutanoate binding site. N-linked (GlcNAc...) asparagine glycosylation occurs at asparagine 141. Serine 190 lines the 4-aminobutanoate pocket. Residues cysteine 199 and cysteine 213 are joined by a disulfide bond. A 4-aminobutanoate-binding site is contributed by glutamate 218. Asparagine 235 and asparagine 275 each carry an N-linked (GlcNAc...) asparagine glycan. A helical transmembrane segment spans residues isoleucine 282–valine 302. Residues serine 303–arginine 314 lie on the Cytoplasmic side of the membrane. The helical transmembrane segment at valine 315 to serine 335 threads the bilayer. At methionine 336 to aspartate 346 the chain is on the extracellular side. The chain crosses the membrane as a helical span at residues isoleucine 347–asparagine 367. The Cytoplasmic portion of the chain corresponds to tyrosine 368 to lysine 458. A helical membrane pass occupies residues tyrosine 459 to phenylalanine 479. Position 480 (serine 480) is a topological domain, extracellular.

Belongs to the ligand-gated ion channel (TC 1.A.9) family. Gamma-aminobutyric acid receptor (TC 1.A.9.5) subfamily. GABRR1 sub-subfamily. Three rho subunits (rho-1/GBRR1, rho-2/GBRR2 and rho-3/GBRR3) coassemble either to form functional homopentamers or heteropentamers. Rho-1/GBRR1 subunits can also associate with alpha-1/GBRA1 subunits to form a functional GABAAR. Interacts with SQSTM1. Expressed in the cerebellum.

The protein localises to the postsynaptic cell membrane. The protein resides in the cell membrane. The catalysed reaction is chloride(in) = chloride(out). Inhibited by TPMPA, a rho-specific antagonist, when forming a homopentamer. In contrast with other GABAARs, rho-1 GABAAR is not inhibited by bicuculline when forming a homopentamer. Rho subunit of the pentameric ligand-gated chloride channels responsible for mediating the effects of gamma-aminobutyric acid (GABA), the major inhibitory neurotransmitter in the brain. Rho-containing GABA-gated chloride channels are a subclass of GABA(A) receptors (GABAARs) entirely composed of rho subunits, where GABA molecules bind at the rho intersubunit interfaces. When activated by GABA, rho-GABAARs selectively allow the flow of chloride anions across the cell membrane down their electrochemical gradient. Rho-1 subunits are primarily expressed in retina where rho-1-containing GABAARs play a role in retinal neurotransmission. Rho-1 GABAARs are also involved in neuronal tonic (extrasynaptic) and phasic (synaptic) transmission in the Purkinje neurons of the cerebellum. Rho-1 GABAARs may also contribute to the regulation of glial development in the cerebellum by controlling extrasynaptic transmission. This Mus musculus (Mouse) protein is Gamma-aminobutyric acid receptor subunit rho-1.